Consider the following 319-residue polypeptide: Lipoyl synthase (319 aa).

Cysteine 66, cysteine 71, cysteine 77, cysteine 92, cysteine 96, cysteine 99, and serine 305 together coordinate [4Fe-4S] cluster. A Radical SAM core domain is found at 78-294; the sequence is FNRGTATFMI…KKEALSIGFT (217 aa).

It belongs to the radical SAM superfamily. Lipoyl synthase family. [4Fe-4S] cluster is required as a cofactor.

The protein localises to the cytoplasm. The enzyme catalyses [[Fe-S] cluster scaffold protein carrying a second [4Fe-4S](2+) cluster] + N(6)-octanoyl-L-lysyl-[protein] + 2 oxidized [2Fe-2S]-[ferredoxin] + 2 S-adenosyl-L-methionine + 4 H(+) = [[Fe-S] cluster scaffold protein] + N(6)-[(R)-dihydrolipoyl]-L-lysyl-[protein] + 4 Fe(3+) + 2 hydrogen sulfide + 2 5'-deoxyadenosine + 2 L-methionine + 2 reduced [2Fe-2S]-[ferredoxin]. Its pathway is protein modification; protein lipoylation via endogenous pathway; protein N(6)-(lipoyl)lysine from octanoyl-[acyl-carrier-protein]: step 2/2. Catalyzes the radical-mediated insertion of two sulfur atoms into the C-6 and C-8 positions of the octanoyl moiety bound to the lipoyl domains of lipoate-dependent enzymes, thereby converting the octanoylated domains into lipoylated derivatives. This is Lipoyl synthase from Buchnera aphidicola subsp. Schizaphis graminum (strain Sg).